Reading from the N-terminus, the 904-residue chain is E3 SUMO-protein ligase SIZ1 (904 aa).

Residues 1–13 are compositionally biased toward acidic residues; the sequence is MINLEDYWEDETP. Residues 1–21 form a disordered region; it reads MINLEDYWEDETPGPDREPTN. In terms of domain architecture, SAP spans 34 to 68; sequence MELLKVSELKDICRSVSFPVSGRKAVLQDLIRNFL. Residues 122 to 170 form a disordered region; sequence MEGPPTVQQQSPSVIRQSPTQRRKTSTTSSTSRAPPPTNPDASSSSSSF. The span at 127 to 136 shows a compositional bias: polar residues; it reads TVQQQSPSVI. Phosphoserine is present on serine 132. Positions 137-154 are enriched in low complexity; the sequence is RQSPTQRRKTSTTSSTSR. Residues 162 to 314 form the PINIT domain; that stretch reads DASSSSSSFA…KLFGYIVEMI (153 aa). Residues 344–431 form an SP-RING-type zinc finger; sequence EDEEMGLTTT…LQNCQKNVEQ (88 aa). The Zn(2+) site is built by cysteine 377, histidine 379, cysteine 400, and cysteine 403. Disordered stretches follow at residues 443–584, 596–616, and 672–733; these read ILED…DDDR, STNT…TLDP, and SPDV…ISDS. A compositionally biased stretch (acidic residues) spans 444–454; the sequence is LEDDDDSDSDS. The segment covering 501–511 has biased composition (basic and acidic residues); the sequence is NNHDDSNRHSN. The segment covering 512-553 has biased composition (low complexity); that stretch reads DNNNNSIKNNDSHNKNNNNNNNNNNNNNDNNNSIENNDSNSN. Composition is skewed to polar residues over residues 561 to 574, 596 to 611, and 672 to 683; these read RSNT…KNLM, STNT…SAPS, and SPDVSVSSPTPR. A compositionally biased stretch (low complexity) spans 684-699; the sequence is NTASNASSSALSTPPL. The span at 721 to 733 shows a compositional bias: polar residues; sequence INSNSYTASISDS. Serine 794 is modified (phosphoserine). Positions 794–904 are required for localization at the bud neck; it reads SLPTTEAITR…QDYGKKYNSG (111 aa). Residues 877–894 are compositionally biased toward polar residues; that stretch reads RQLSNTSSTSPIMGTWKT. Residues 877 to 904 form a disordered region; sequence RQLSNTSSTSPIMGTWKTQDYGKKYNSG.

Belongs to the PIAS family. In terms of assembly, interacts with UBC9 and CDC3. In terms of processing, phosphorylated in early M-phase. Autosumoylated upon ethanol stress.

It localises to the cytoplasm. Its subcellular location is the nucleus. The protein localises to the bud neck. The protein operates within protein modification; protein sumoylation. Functionally, acts as an E3 ligase mediating SUMO/Smt3 attachment to septins and PCNA. May be involved in chromosome maintenance. This Saccharomyces cerevisiae (strain ATCC 204508 / S288c) (Baker's yeast) protein is E3 SUMO-protein ligase SIZ1 (SIZ1).